Here is a 298-residue protein sequence, read N- to C-terminus: Syntaxin-125 (298 aa).

M1 carries the post-translational modification N-acetylmethionine. The Cytoplasmic portion of the chain corresponds to 1–274 (MNDLFSNSFK…KSSRKWTCYA (274 aa)). Residues 25–155 (TMNLDKFFED…NEYKETVERR (131 aa)) adopt a coiled-coil conformation. Positions 198–260 (ISEIQERHDA…RRGTDQLQDA (63 aa)) constitute a t-SNARE coiled-coil homology domain. A helical; Anchor for type IV membrane protein transmembrane segment spans residues 275–295 (IILFIVIFILLLIPLLPHIML). Residues 296-298 (MLK) lie on the Vesicular side of the membrane.

It belongs to the syntaxin family. As to quaternary structure, part of the t-SNARE complex.

Its subcellular location is the membrane. Vesicle trafficking protein that functions in the secretory pathway. This Arabidopsis thaliana (Mouse-ear cress) protein is Syntaxin-125 (SYP125).